The sequence spans 237 residues: 6-carboxyhexanoate--CoA ligase (237 aa).

It belongs to the BioW family. Homodimer. Mg(2+) is required as a cofactor.

The enzyme catalyses heptanedioate + ATP + CoA = 6-carboxyhexanoyl-CoA + AMP + diphosphate. Its pathway is metabolic intermediate metabolism; pimeloyl-CoA biosynthesis; pimeloyl-CoA from pimelate: step 1/1. Its function is as follows. Catalyzes the transformation of pimelate into pimeloyl-CoA with concomitant hydrolysis of ATP to AMP. The protein is 6-carboxyhexanoate--CoA ligase of Methanocaldococcus jannaschii (strain ATCC 43067 / DSM 2661 / JAL-1 / JCM 10045 / NBRC 100440) (Methanococcus jannaschii).